A 345-amino-acid chain; its full sequence is S-adenosylmethionine:tRNA ribosyltransferase-isomerase (345 aa).

The protein belongs to the QueA family. Monomer.

The protein localises to the cytoplasm. The catalysed reaction is 7-aminomethyl-7-carbaguanosine(34) in tRNA + S-adenosyl-L-methionine = epoxyqueuosine(34) in tRNA + adenine + L-methionine + 2 H(+). The protein operates within tRNA modification; tRNA-queuosine biosynthesis. In terms of biological role, transfers and isomerizes the ribose moiety from AdoMet to the 7-aminomethyl group of 7-deazaguanine (preQ1-tRNA) to give epoxyqueuosine (oQ-tRNA). The protein is S-adenosylmethionine:tRNA ribosyltransferase-isomerase of Thermus thermophilus (strain ATCC BAA-163 / DSM 7039 / HB27).